The sequence spans 427 residues: Trigger factor (427 aa).

The region spanning 163 to 248 (GDTVVIDFVG…VHEVKAKEVP (86 aa)) is the PPIase FKBP-type domain.

The protein belongs to the FKBP-type PPIase family. Tig subfamily.

Its subcellular location is the cytoplasm. It catalyses the reaction [protein]-peptidylproline (omega=180) = [protein]-peptidylproline (omega=0). Its function is as follows. Involved in protein export. Acts as a chaperone by maintaining the newly synthesized protein in an open conformation. Functions as a peptidyl-prolyl cis-trans isomerase. This is Trigger factor from Streptococcus equi subsp. equi (strain 4047).